The primary structure comprises 313 residues: PDCD10 and GCKIII kinases-associated protein 1 (313 aa).

The segment at arginine 40–cysteine 89 is disordered. Phosphoserine occurs at positions 60 and 64. Positions serine 60–leucine 73 are enriched in polar residues. Residue threonine 104 is modified to Phosphothreonine. 3 positions are modified to phosphoserine: serine 107, serine 237, and serine 240. The interval tyrosine 253–valine 286 is disordered. Basic and acidic residues predominate over residues glycine 269–valine 285.

Interacts with KEAP1; this interaction prevents the ubiquitination of KEAP1 by TRIM25, thus protecting KEAP1 from degradation. Found in association with PDCD10 and members of the STE20 kinases, such as STK24, STK25 and STK26.

The protein resides in the cell membrane. Acts as a tumor suppressor. Acts as a tumor suppressor for colorectal cancer cell proliferation by targeting KEAP1/USP17/ELK1/CDK6 axis. The chain is PDCD10 and GCKIII kinases-associated protein 1 from Mus musculus (Mouse).